Consider the following 372-residue polypeptide: Ligninase B (372 aa).

The signal sequence occupies residues 1–21 (MAFKQLFAAISLALSLSAANA). The propeptide occupies 22–28 (AAVIEKR). Intrachain disulfides connect C31-C43, C42-C313, C62-C148, and C277-C345. Catalysis depends on H75, which acts as the Proton acceptor. The Ca(2+) site is built by D76, G94, D96, and S98. Residue H204 coordinates heme b. Residues S205, D222, T224, I227, and D229 each coordinate Ca(2+). A glycan (N-linked (GlcNAc...) asparagine) is linked at N285. The segment covering 350–361 (FPTLTTLPGPET) has biased composition (low complexity). The interval 350–372 (FPTLTTLPGPETSVQRIPPPPGA) is disordered.

This sequence belongs to the peroxidase family. Ligninase subfamily. Heme b serves as cofactor. The cofactor is Ca(2+).

It carries out the reaction 1-(3,4-dimethoxyphenyl)-2-(2-methoxyphenoxy)propane-1,3-diol + H2O2 = 3,4-dimethoxybenzaldehyde + guaiacol + glycolaldehyde + H2O. The catalysed reaction is 2 (3,4-dimethoxyphenyl)methanol + H2O2 = 2 (3,4-dimethoxyphenyl)methanol radical + 2 H2O. It functions in the pathway secondary metabolite metabolism; lignin degradation. Its function is as follows. Depolymerization of lignin. Catalyzes the C(alpha)-C(beta) cleavage of the propyl side chains of lignin. This Phanerodontia chrysosporium (White-rot fungus) protein is Ligninase B (LIPB).